The primary structure comprises 577 residues: Aspartate--tRNA(Asp/Asn) ligase (577 aa).

Glutamate 171 provides a ligand contact to L-aspartate. The tract at residues 195 to 198 is aspartate; that stretch reads QLFK. An L-aspartate-binding site is contributed by arginine 217. Residues 217-219 and glutamine 226 each bind ATP; that span reads RDE. Histidine 444 is a binding site for L-aspartate. Glutamate 474 is a binding site for ATP. Residue arginine 481 participates in L-aspartate binding. An ATP-binding site is contributed by 526 to 529; that stretch reads GFDR.

Belongs to the class-II aminoacyl-tRNA synthetase family. Type 1 subfamily. In terms of assembly, homodimer.

It localises to the cytoplasm. It carries out the reaction tRNA(Asx) + L-aspartate + ATP = L-aspartyl-tRNA(Asx) + AMP + diphosphate. Its function is as follows. Aspartyl-tRNA synthetase with relaxed tRNA specificity since it is able to aspartylate not only its cognate tRNA(Asp) but also tRNA(Asn). Reaction proceeds in two steps: L-aspartate is first activated by ATP to form Asp-AMP and then transferred to the acceptor end of tRNA(Asp/Asn). This is Aspartate--tRNA(Asp/Asn) ligase from Helicobacter pylori (strain Shi470).